A 378-amino-acid polypeptide reads, in one-letter code: Metacaspase-1B (378 aa).

Residues 1–70 (MCSPPPYPPQ…QEAQSFGGGA (70 aa)) form a disordered region. Residues 10–29 (QGHHYPPSPHGSYYSPTPYG) are compositionally biased toward low complexity. Active-site residues include H169 and C225.

It belongs to the peptidase C14B family.

Its function is as follows. Involved in cell death (apoptosis). In Aspergillus terreus (strain NIH 2624 / FGSC A1156), this protein is Metacaspase-1B (casB).